Reading from the N-terminus, the 1221-residue chain is A disintegrin and metalloproteinase with thrombospondin motifs 18 (1221 aa).

The N-terminal stretch at 1–47 (MECALLLACAFPAAGSGPPRGLAGLGRVAKALQLCCLCCASVAAALA) is a signal peptide. Positions 48–284 (SDSSSGASGL…EYGSSGRPRR (237 aa)) are excised as a propeptide. Residues N151 and N190 are each glycosylated (N-linked (GlcNAc...) asparagine). The Cysteine switch signature appears at 252–259 (HFCGRRKK). A Zn(2+)-binding site is contributed by C254. A disordered region spans residues 258 to 291 (KKYAPKPPTEDTYLRFDEYGSSGRPRRSAGKSQK). Positions 265 to 275 (PTEDTYLRFDE) are enriched in basic and acidic residues. The region spanning 293-498 (LNVETLVVAD…PQAGCLVDEP (206 aa)) is the Peptidase M12B domain. N-linked (GlcNAc...) asparagine glycosylation is present at N313. Cystine bridges form between C369–C420, C395–C402, C414–C493, C453–C477, C521–C546, C532–C553, C541–C572, C566–C577, C601–C638, C605–C643, and C616–C628. Zn(2+) is bound at residue H436. E437 is an active-site residue. The Zn(2+) site is built by H440 and H446. Residues 498-577 (PKQAGQYKYP…LSMWCRQGQC (80 aa)) form the Disintegrin domain. Positions 589 to 644 (HGQWSAWSKWSECSRTCGGGVKFQERHCNNPKPQYGGLFCPGSSRIYQLCNINPCN) constitute a TSP type-1 1 domain. N-linked (GlcNAc...) asparagine glycosylation is found at N745, N838, and N909. The spacer stretch occupies residues 750–876 (FYKGLYLNQH…TPPATKRPAY (127 aa)). TSP type-1 domains follow at residues 931 to 990 (CPAY…NSHA), 991 to 1049 (CPPQ…GRCP), 1052 to 1116 (SRLQ…RACP), and 1123 to 1178 (MVAG…NFCP). Residues 1184–1221 (EDPSCVDFFNWCHLVPQHGVCNHKFYGKQCCKSCTRKI) form the PLAC domain.

Zn(2+) is required as a cofactor. The precursor is cleaved by a furin endopeptidase. In terms of processing, glycosylated. Can be O-fucosylated by POFUT2 on a serine or a threonine residue found within the consensus sequence C1-X(2)-(S/T)-C2-G of the TSP type-1 repeat domains where C1 and C2 are the first and second cysteine residue of the repeat, respectively. Fucosylated repeats can then be further glycosylated by the addition of a beta-1,3-glucose residue by the glucosyltransferase, B3GALTL. Fucosylation mediates the efficient secretion of ADAMTS family members. Can also be C-glycosylated with one or two mannose molecules on tryptophan residues within the consensus sequence W-X-X-W of the TPRs, and N-glycosylated. These other glycosylations can also facilitate secretion. Expressed in fetal lung, liver, and kidney and in adult brain, prostate, submaxillary gland, and endothelium.

It localises to the secreted. The protein resides in the extracellular space. Its subcellular location is the extracellular matrix. The polypeptide is A disintegrin and metalloproteinase with thrombospondin motifs 18 (ADAMTS18) (Homo sapiens (Human)).